A 157-amino-acid chain; its full sequence is Crossover junction endodeoxyribonuclease RuvC (157 aa).

Catalysis depends on residues Asp7, Glu67, and Asp140. Positions 7, 67, and 140 each coordinate Mg(2+).

Belongs to the RuvC family. In terms of assembly, homodimer which binds Holliday junction (HJ) DNA. The HJ becomes 2-fold symmetrical on binding to RuvC with unstacked arms; it has a different conformation from HJ DNA in complex with RuvA. In the full resolvosome a probable DNA-RuvA(4)-RuvB(12)-RuvC(2) complex forms which resolves the HJ. Mg(2+) is required as a cofactor.

The protein resides in the cytoplasm. The catalysed reaction is Endonucleolytic cleavage at a junction such as a reciprocal single-stranded crossover between two homologous DNA duplexes (Holliday junction).. The RuvA-RuvB-RuvC complex processes Holliday junction (HJ) DNA during genetic recombination and DNA repair. Endonuclease that resolves HJ intermediates. Cleaves cruciform DNA by making single-stranded nicks across the HJ at symmetrical positions within the homologous arms, yielding a 5'-phosphate and a 3'-hydroxyl group; requires a central core of homology in the junction. The consensus cleavage sequence is 5'-(A/T)TT(C/G)-3'. Cleavage occurs on the 3'-side of the TT dinucleotide at the point of strand exchange. HJ branch migration catalyzed by RuvA-RuvB allows RuvC to scan DNA until it finds its consensus sequence, where it cleaves and resolves the cruciform DNA. This Rickettsia bellii (strain OSU 85-389) protein is Crossover junction endodeoxyribonuclease RuvC.